The sequence spans 417 residues: Probable histone-binding protein lin-53 (417 aa).

WD repeat units follow at residues 118–158 (NHEG…AVPR), 170–210 (GHTK…NVAG), 220–260 (GHES…PGHC), 263–303 (AHSA…MKLH), 307–347 (SHRD…EDQS), and 364–404 (GHTA…YNEV).

It belongs to the WD repeat RBAP46/RBAP48/MSI1 family. As to quaternary structure, binds directly to helix 1 of the histone fold of histone H4, a region that is not accessible when H4 is in chromatin. Probable component of a NuRD-like complex, composed of at least lin-53 and hda-1. Interacts with lin-35. Interacts with hda-1; the interaction is direct. Component of the DRM complex, at least composed of lin-9, lin-35, lin-37, lin-52, lin-53, lin-54- dpl-1 and efl-1. Interacts with hcp-3.

The protein resides in the nucleus. It localises to the chromosome. The protein localises to the centromere. In terms of biological role, core histone-binding subunit that may target chromatin assembly factors, chromatin remodeling factors and histone deacetylases to their histone substrates in a manner that is regulated by nucleosomal DNA. Required for hcp-3 and his-1 stabilization, localization of hcp-3 to centromeres and for proper chromosome segregation. Synthetic multivulva class B (synMuvB) protein. SynMuvB proteins are required to repress the induction of vulval development by Ras signaling and probably act by forming the multiprotein DRM complex that represses transcription. The protein is Probable histone-binding protein lin-53 of Caenorhabditis elegans.